A 261-amino-acid polypeptide reads, in one-letter code: Transcription antitermination protein NusB (261 aa).

A disordered region spans residues 168-261; sequence ARVEDQPSDD…DLHKKDTTDD (94 aa). Over residues 217 to 228 the composition is skewed to polar residues; that stretch reads VDTTSGNASDPE. The span at 242–261 shows a compositional bias: basic and acidic residues; sequence PTSKDHELATDLHKKDTTDD.

The protein belongs to the NusB family.

Functionally, involved in transcription antitermination. Required for transcription of ribosomal RNA (rRNA) genes. Binds specifically to the boxA antiterminator sequence of the ribosomal RNA (rrn) operons. The sequence is that of Transcription antitermination protein NusB from Cutibacterium acnes (strain DSM 16379 / KPA171202) (Propionibacterium acnes).